The chain runs to 1178 residues: MADADEYSTAPTQQEITPLQTTATIINAISGECITTNVDFFVSLDKFKQFIARKWKIPPDQLLILLPYGNKLKPSMFKELLINRSFTLNDFYVYDRRLFSLVSKPTPTNLLTSKDSNPMNSPNSNDLTETLEYLIKNSHISQYQGSDTIMIKPMPSPLEDADVDLSRLNYHSVTSLLTTNLGWLSALEIDVHYFKSLIPDIIAHIKRIFDGLTVCSQYLKLYCFDVESLYNSNVQFLNQLVDNGMTSKWEKCFNDTLSKLTALEGDSLQKFINIESLLENEKSVKILNHSINGKLNKIKREIDENASFRDIITVNIDRLRQMFTPNESKFELEDQMAESFEVLVSEMRTRSRNVLDKEEEEFNSQEFLKSMNVMLEKDKKESVKTLFTISQALYSQIGELIDLKKSLQKHAVAILGNIAFTQMEILGIKRLLLNECNKDLELYKKYEVEFAQVEDLPLIYGLYLIEKYRRLSWFQQILSFISNFNQDLELFKQNELRTRNKWVKNFGSIATVFCEDLLSSSDFKRLNEYHSHTSPPNEDEEDENENSIANYRQDLVKVSQAIDNYMTQIKETDVSEPIIDLLSKTLFETKRFHIIYSNFKNNNNNSSNGNSISPEGSIALKSDDVVKGYKTRIKKLESLLHEFQYSDIGHWPQGVLNTHLKPFRGSATSINKKKFLGASVLLEPANISEVNIDSVSQANNHQIQELESNVDDLLHQLQLLKEENNRKSMQISEMGKKISDLEVEKTAYRETLTNLNQELARLTNEEQSHRTEIFTLNASFKKQLNDIISQDNEKIEKLTGDYDDVSKSRERLQMDLDESNKKHEQEVNLLKADIERLGKQIVTSEKSYAETNSSSMEKGEKFETIPLAEDPGRENQISAYTQTLQDRIFDIISTNIFILENIGLLLTFDNNNNIQIRRVKGLKKGTAQSNILDESTQMLDAHDNSLIKSPVFQKLKDEYELIKSVANGSEKDTQQSIFLGNITQLYDNKLYEVAVIRRFKDIETLAKKLTKENKIKRTLLERFQREKVTLRNFQIGDLALFLPTRENVNSVGSMSSSTSSLSSSFSSVDLSTPPPLDAMSIQSSPSVIHSNVINQASISGRDKNKLMRPWAAFTAFEESTRYFLKDEKGLTKGKEWFVGRIVTLEHFVADSPSNNPFRLPKGSVWFQVTAVVVSYQGV.

Coiled coils occupy residues 538–572 and 696–850; these read EDEE…IKET and SQAN…SYAE.

The protein belongs to the ATG11 family. Homodimer and potential homooligomers. Interacts with ATG1 kinase. Interacts with the ATG19 cargo protein transporter. Interacts with the ATG34 cargo protein transporter. Interacts with ATG9. Interacts with ATG17. Interacts with ATG20. Interacts with ATG30. Interacts with ATG32; to recruit ATG11 to mitochondria. Interacts with ATG36. Interacts with YPT1. Post-translationally, acetylated by the NuA4 histone acetyltransferase (HAT) complex.

It is found in the preautophagosomal structure membrane. It localises to the vacuole membrane. Involved in cytoplasm to vacuole transport (Cvt), pexophagy, mitophagy and nucleophagy. Recruits mitochondria for their selective degradation via autophagy (mitophagy) during starvation, through its interaction with ATG32. Works as scaffold proteins that recruit ATG proteins to the pre-autophagosome (PAS), the site of vesicle/autophagosome formation. Required for ATG9 anterograde transport from the mitochondria to the PAS. Also recruits the ATG19-prAPE1 complex to the PAS. Required for the Cvt vesicles completion. Plays a significant role in life span extension. In Saccharomyces cerevisiae (strain ATCC 204508 / S288c) (Baker's yeast), this protein is Autophagy-related protein 11 (ATG11).